A 540-amino-acid chain; its full sequence is Probable ATP-dependent RNA helicase DDX28 (540 aa).

Positions 3–18 (LAGPSRLLALAVRLLL) match the Mitochondrial targeting signal motif. The short motif at 126-156 (GSFVDLGLEPRVLLALQEAVPEVVQPTSVQS) is the Q motif element. Residues 159-351 (IPPLLRGRHL…SKVTSPDSLT (193 aa)) enclose the Helicase ATP-binding domain. 172-179 (AETGSGKT) is an ATP binding site. The Nuclear export signal motif lies at 180-191 (LSYLLPLFQRLL). The short motif at 286–289 (DEVD) is the DEAD element. The Helicase C-terminal domain occupies 377–536 (KVTELVQILK…GLASSVGDPL (160 aa)). The Nuclear localization signal signature appears at 520 to 523 (RRRR).

Belongs to the DEAD box helicase family. Monomer. Found in a complex with GRSF1, DHX30, FASTKD2 and FASTKD5. Associates with the 16S mitochondrial rRNA (16S mt-rRNA) and with the mitochondrial ribosome large subunit (39S).

Its subcellular location is the nucleus. The protein resides in the mitochondrion. The protein localises to the mitochondrion matrix. It localises to the mitochondrion nucleoid. It carries out the reaction ATP + H2O = ADP + phosphate + H(+). Functionally, plays an essential role in facilitating the proper assembly of the mitochondrial large ribosomal subunit and its helicase activity is essential for this function. May be involved in RNA processing or transport. Has RNA and Mg(2+)-dependent ATPase activity. The protein is Probable ATP-dependent RNA helicase DDX28 (Ddx28) of Mus musculus (Mouse).